The sequence spans 165 residues: Small ribosomal subunit protein bS16 (165 aa).

This sequence belongs to the bacterial ribosomal protein bS16 family.

The protein is Small ribosomal subunit protein bS16 of Azobacteroides pseudotrichonymphae genomovar. CFP2.